Reading from the N-terminus, the 260-residue chain is Triosephosphate isomerase (260 aa).

11-13 provides a ligand contact to substrate; sequence NWK. The active-site Electrophile is H103. The active-site Proton acceptor is E175. Residues G181, S220, and 241–242 contribute to the substrate site; that span reads GG.

This sequence belongs to the triosephosphate isomerase family. In terms of assembly, homodimer.

It is found in the cytoplasm. The catalysed reaction is D-glyceraldehyde 3-phosphate = dihydroxyacetone phosphate. It functions in the pathway carbohydrate biosynthesis; gluconeogenesis. Its pathway is carbohydrate degradation; glycolysis; D-glyceraldehyde 3-phosphate from glycerone phosphate: step 1/1. Its function is as follows. Involved in the gluconeogenesis. Catalyzes stereospecifically the conversion of dihydroxyacetone phosphate (DHAP) to D-glyceraldehyde-3-phosphate (G3P). The sequence is that of Triosephosphate isomerase from Shewanella sp. (strain MR-4).